The following is a 1193-amino-acid chain: Chloride channel protein 2 (1193 aa).

Residues 1–168 (MVYFGDRQRD…WIWRHTVARL (168 aa)) lie on the Cytoplasmic side of the membrane. A disordered region spans residues 76–97 (SHAFYPCPPPAENARDSDSSDD). 2 consecutive transmembrane segments (helical) span residues 169–204 (GEDWVFLALLGIIMALLSFIMDKGISICTNARIWLY) and 213–236 (VQYIAWVSLPVCLILFSAGFVHLI). Positions 242–246 (GSGIP) match the Selectivity filter part_1 motif. A chloride-binding site is contributed by Ser243. An intramembrane region (helical) is located at residues 245 to 252 (IPEMKTIL). The next 2 membrane-spanning stretches (helical) occupy residues 261–279 (LTFKTLVAKVIGLTATLGS) and 286–304 (EGPFVHIASIVAQLLSKLV). Positions 284-288 (GKEGP) match the Selectivity filter part_2 motif. Intramembrane regions (helical) lie at residues 320–332 (MLAAACAVGVGAC) and 336–344 (PVGGVLFSI). The next 5 membrane-spanning stretches (helical) occupy residues 356 to 373 (YWRGFFAAVCGATVFRLL), 402 to 430 (LFVFALIGLVCGLGGASYVWVHRRYVLFM), 439 to 458 (FLQKNRFLYPGFLALLVSSI), 511 to 530 (FGNLVIYTLFTFVVSIIAST), and 536 to 555 (GMFIPVFKIGAGFGRLVGEF). The short motif at 536-540 (GMFIP) is the Selectivity filter part_3 element. Phe538 provides a ligand contact to chloride. The segment at residues 576–590 (GGYAVVGAAAFSGSV) is an intramembrane region (helical). Positions 591-592 (TH) form an intramembrane region, note=Loop between two helices. An intramembrane region (helical) is located at residues 593 to 604 (TVSVAVIIFEMT). The segment at residues 605-609 (GQITH) is an intramembrane region (note=Loop between two helices). Residues 610–626 (VVPVMIAVLVANAVAAL) form a helical membrane-spanning segment. Topologically, residues 627-1193 (LQPSIYDSII…KSNTENGNHA (567 aa)) are cytoplasmic. Tyr632 contacts chloride. A CBS 1 domain is found at 663 to 723 (MVRDVKYIWH…KMIEKHIGRE (61 aa)). Disordered regions lie at residues 848-884 (TLQDVQPDPETGSLSPAASNHEVEVPRTPSTPGVSKK), 1103-1122 (NSFVPPTRDEDADEKPAVEK), and 1159-1193 (IKHTDKGTVSLTMPPQESKQSPSADKSNTENGNHA). One can recognise a CBS 2 domain in the interval 1048-1105 (IDPSPFQLVERTSILKVHSLFSMVGINHAYVTKIGRLVGVVGLKELRKAIEDINSNSF). Polar residues predominate over residues 1165-1193 (GTVSLTMPPQESKQSPSADKSNTENGNHA).

Belongs to the chloride channel (TC 2.A.49) family. In terms of tissue distribution, at embryonic stages 13-16, expressed in a subset of the midline cells of the midline primordium and in all of the midline glia. Expressed along the Z-line of the sarcomere in larval longitudinal muscles.

The protein resides in the membrane. Functionally, voltage-gated chloride channel. Chloride channels have several functions including the regulation of cell volume; membrane potential stabilization, signal transduction and transepithelial transport. The chain is Chloride channel protein 2 (ClC-a) from Drosophila melanogaster (Fruit fly).